The primary structure comprises 435 residues: E3 ubiquitin-protein ligase RNFT1 (435 aa).

Residues 1–62 (MPLFLLSLPT…SSEDASTPQC (62 aa)) are disordered. The span at 16–34 (GHERRQRPEAKTSGSEKKY) shows a compositional bias: basic and acidic residues. A compositionally biased stretch (polar residues) spans 40 to 62 (ANRSQLHSPPGTGSSEDASTPQC). The next 6 helical transmembrane spans lie at 158–178 (ILIL…LGIG), 203–223 (IQCA…YYTF), 233–253 (IFLN…IVGI), 256–276 (FILK…PSFI), 298–318 (TFVP…FGNV), and 323–343 (LGIL…FGHL). The required for ubiquitin ligase activity and for protection against ER stress-induced cell death stretch occupies residues 368–419 (CSDVDDICSICQAEFQKPILLICQHIFCEECMTLWFNREKTCPLCRTVISDH). The RING-type zinc-finger motif lies at 375–413 (CSICQAEFQKPILLICQHIFCEECMTLWFNREKTCPLCR).

In terms of tissue distribution, expressed at highest levels in testis, lower levels in heart, liver, lung, and kidney. Not detected in brain, ovary, and uterus. Down-regulated in testis from patients with maturation arrest (MA) or Sertoli cell-only syndrome (SCOS). Ubiquitously expressed with high expression in testis.

It is found in the endoplasmic reticulum membrane. The enzyme catalyses S-ubiquitinyl-[E2 ubiquitin-conjugating enzyme]-L-cysteine + [acceptor protein]-L-lysine = [E2 ubiquitin-conjugating enzyme]-L-cysteine + N(6)-ubiquitinyl-[acceptor protein]-L-lysine.. It participates in protein modification; protein ubiquitination. E3 ubiquitin-protein ligase that acts in the endoplasmic reticulum (ER)-associated degradation (ERAD) pathway, which targets misfolded proteins that accumulate in the endoplasmic reticulum (ER) for ubiquitination and subsequent proteasome-mediated degradation. Protects cells from ER stress-induced apoptosis. The chain is E3 ubiquitin-protein ligase RNFT1 (RNFT1) from Homo sapiens (Human).